The chain runs to 631 residues: Leucine aminopeptidase 2-2 (631 aa).

Substrate contacts are provided by residues 140-142 (QCQ) and 265-270 (PYGGME). His-294 serves as a coordination point for Zn(2+). Glu-295 (proton acceptor) is an active-site residue. Zn(2+)-binding residues include His-298 and Glu-317. The active-site Proton donor is the Tyr-395.

This sequence belongs to the peptidase M1 family. The cofactor is Zn(2+).

It localises to the cytoplasm. The protein localises to the nucleus. It carries out the reaction an epoxide + H2O = an ethanediol. Aminopeptidase that preferentially cleaves di- and tripeptides. Also has low epoxide hydrolase activity (in vitro). Can hydrolyze the epoxide leukotriene LTA(4) but it forms preferentially 5,6-dihydroxy-7,9,11,14-eicosatetraenoic acid rather than the cytokine leukotriene B(4) as the product compared to the homologous mammalian enzyme (in vitro). In Meyerozyma guilliermondii (strain ATCC 6260 / CBS 566 / DSM 6381 / JCM 1539 / NBRC 10279 / NRRL Y-324) (Yeast), this protein is Leucine aminopeptidase 2-2.